We begin with the raw amino-acid sequence, 459 residues long: Cysteine--tRNA ligase (459 aa).

Position 28 (Cys-28) interacts with Zn(2+). Positions 30 to 40 match the 'HIGH' region motif; sequence VTIYDLCHIGH. Zn(2+) is bound by residues Cys-209, His-234, and Glu-238. Positions 266 to 270 match the 'KMSKS' region motif; sequence KMSKS. Lys-269 provides a ligand contact to ATP.

Belongs to the class-I aminoacyl-tRNA synthetase family. As to quaternary structure, monomer. Zn(2+) is required as a cofactor.

It localises to the cytoplasm. It catalyses the reaction tRNA(Cys) + L-cysteine + ATP = L-cysteinyl-tRNA(Cys) + AMP + diphosphate. The polypeptide is Cysteine--tRNA ligase (Shewanella baltica (strain OS195)).